Reading from the N-terminus, the 59-residue chain is Small, acid-soluble spore protein H (59 aa).

Belongs to the SspH family.

It localises to the spore core. This Alkaliphilus metalliredigens (strain QYMF) protein is Small, acid-soluble spore protein H.